The primary structure comprises 87 residues: Small ribosomal subunit protein bS20 (87 aa).

The protein belongs to the bacterial ribosomal protein bS20 family.

Functionally, binds directly to 16S ribosomal RNA. The polypeptide is Small ribosomal subunit protein bS20 (Clostridium botulinum (strain Alaska E43 / Type E3)).